Here is a 564-residue protein sequence, read N- to C-terminus: Dihydroxy-acid dehydratase (564 aa).

Aspartate 78 serves as a coordination point for Mg(2+). Cysteine 119 serves as a coordination point for [2Fe-2S] cluster. 2 residues coordinate Mg(2+): aspartate 120 and lysine 121. An N6-carboxylysine modification is found at lysine 121. Cysteine 192 serves as a coordination point for [2Fe-2S] cluster. Residue glutamate 451 coordinates Mg(2+). The active-site Proton acceptor is the serine 477.

This sequence belongs to the IlvD/Edd family. Homodimer. Requires [2Fe-2S] cluster as cofactor. It depends on Mg(2+) as a cofactor.

The enzyme catalyses (2R)-2,3-dihydroxy-3-methylbutanoate = 3-methyl-2-oxobutanoate + H2O. It catalyses the reaction (2R,3R)-2,3-dihydroxy-3-methylpentanoate = (S)-3-methyl-2-oxopentanoate + H2O. Its pathway is amino-acid biosynthesis; L-isoleucine biosynthesis; L-isoleucine from 2-oxobutanoate: step 3/4. It functions in the pathway amino-acid biosynthesis; L-valine biosynthesis; L-valine from pyruvate: step 3/4. Its function is as follows. Functions in the biosynthesis of branched-chain amino acids. Catalyzes the dehydration of (2R,3R)-2,3-dihydroxy-3-methylpentanoate (2,3-dihydroxy-3-methylvalerate) into 2-oxo-3-methylpentanoate (2-oxo-3-methylvalerate) and of (2R)-2,3-dihydroxy-3-methylbutanoate (2,3-dihydroxyisovalerate) into 2-oxo-3-methylbutanoate (2-oxoisovalerate), the penultimate precursor to L-isoleucine and L-valine, respectively. The sequence is that of Dihydroxy-acid dehydratase from Nitratiruptor sp. (strain SB155-2).